The sequence spans 235 residues: 2,3-bisphosphoglycerate-dependent phosphoglycerate mutase (235 aa).

Substrate contacts are provided by residues 8-15 (RHGESIWN), 21-22 (TG), Arg-58, 110-113 (ERYY), Lys-121, 137-138 (RR), and 181-182 (GN). Residue His-9 is the Tele-phosphohistidine intermediate of the active site. Glu-110 acts as the Proton donor/acceptor in catalysis.

Belongs to the phosphoglycerate mutase family. BPG-dependent PGAM subfamily.

The enzyme catalyses (2R)-2-phosphoglycerate = (2R)-3-phosphoglycerate. The protein operates within carbohydrate degradation; glycolysis; pyruvate from D-glyceraldehyde 3-phosphate: step 3/5. In terms of biological role, catalyzes the interconversion of 2-phosphoglycerate and 3-phosphoglycerate. This chain is 2,3-bisphosphoglycerate-dependent phosphoglycerate mutase, found in Methanococcus vannielii (strain ATCC 35089 / DSM 1224 / JCM 13029 / OCM 148 / SB).